The following is a 231-amino-acid chain: L-ribulose-5-phosphate 4-epimerase SgbE (231 aa).

Substrate contacts are provided by residues 27–28 (GN), 44–45 (SG), and 74–75 (SS). 3 residues coordinate Zn(2+): Asp76, His95, and His97. Catalysis depends on Asp120, which acts as the Proton donor/acceptor. His171 lines the Zn(2+) pocket. Tyr229 serves as the catalytic Proton donor/acceptor.

Belongs to the aldolase class II family. AraD/FucA subfamily. The cofactor is Zn(2+).

It carries out the reaction L-ribulose 5-phosphate = D-xylulose 5-phosphate. Functionally, catalyzes the interconversion of L-ribulose 5-phosphate (LRu5P) and D-xylulose 5-phosphate (D-Xu5P) via a retroaldol/aldol mechanism (carbon-carbon bond cleavage analogous to a class II aldolase reaction). May be involved in the utilization of 2,3-diketo-L-gulonate. In Haemophilus influenzae (strain ATCC 51907 / DSM 11121 / KW20 / Rd), this protein is L-ribulose-5-phosphate 4-epimerase SgbE.